The sequence spans 106 residues: uncharacterized protein (106 aa).

Residues 9–27 (ALAALAFTLGLIGLAAWAL) form a helical membrane-spanning segment. The interval 84–106 (TPKGPPPASALSPSPVAEPEPVV) is disordered.

This sequence belongs to the FliO/MopB family.

It localises to the cell membrane. Its subcellular location is the bacterial flagellum basal body. This is an uncharacterized protein from Caulobacter vibrioides (strain ATCC 19089 / CIP 103742 / CB 15) (Caulobacter crescentus).